Consider the following 85-residue polypeptide: uncharacterized protein (85 aa).

Residues 1-85 (MRWRPSSWSA…DQEQCGQHCR (85 aa)) are disordered. Residues 47–61 (ASVEGEGGRHADRHG) show a composition bias toward basic and acidic residues.

This is an uncharacterized protein from Streptomyces lividans.